A 389-amino-acid chain; its full sequence is Cytochrome f (389 aa).

Positions 1–42 (MTTFFISKVNGPVNKSLIWLKIHIYEFFLLKFMLLFPPTVCS) are cleaved as a signal peptide. Residues Y105, C125, C128, and H129 each contribute to the heme site. Residues 355–375 (LQALIVFFIFVILTQLFLVLK) form a helical membrane-spanning segment.

It belongs to the cytochrome f family. The 4 large subunits of the cytochrome b6-f complex are cytochrome b6, subunit IV (17 kDa polypeptide, petD), cytochrome f and the Rieske protein, while the 4 small subunits are PetG, PetL, PetM and PetN. The complex functions as a dimer. Requires heme as cofactor.

It is found in the plastid. The protein resides in the chloroplast thylakoid membrane. Its function is as follows. Component of the cytochrome b6-f complex, which mediates electron transfer between photosystem II (PSII) and photosystem I (PSI), cyclic electron flow around PSI, and state transitions. The chain is Cytochrome f from Pleurastrum terricola (Filamentous green alga).